The chain runs to 231 residues: Endo-1,4-beta-xylanase 4 (231 aa).

Positions methionine 1–alanine 18 are cleaved as a signal peptide. Residues glycine 42–glutamine 230 form the GH11 domain. N-linked (GlcNAc...) asparagine glycosylation occurs at asparagine 99. Catalysis depends on glutamate 126, which acts as the Nucleophile. Glutamate 217 functions as the Proton donor in the catalytic mechanism.

This sequence belongs to the glycosyl hydrolase 11 (cellulase G) family.

Its subcellular location is the secreted. The catalysed reaction is Endohydrolysis of (1-&gt;4)-beta-D-xylosidic linkages in xylans.. It functions in the pathway glycan degradation; xylan degradation. In terms of biological role, endo-1,4-beta-xylanase involved in the hydrolysis of xylan, a major structural heterogeneous polysaccharide found in plant biomass representing the second most abundant polysaccharide in the biosphere, after cellulose. This is Endo-1,4-beta-xylanase 4 (XYL4) from Pyricularia grisea (Crabgrass-specific blast fungus).